The primary structure comprises 589 residues: Heterogeneous nuclear ribonucleoprotein L (589 aa).

Positions 1–16 (MSRRLLPRAEKRRRRL) are enriched in basic residues. Residues 1 to 100 (MSRRLLPRAE…NYDDPHKTPA (100 aa)) form a disordered region. A compositionally biased stretch (basic and acidic residues) spans 17–27 (EQRQQPDEQRR). A compositionally biased stretch (gly residues) spans 38–54 (AGGGGGGGRYYGGGSEG). Ser-52 carries the post-translational modification Phosphoserine. Glycyl lysine isopeptide (Lys-Gly) (interchain with G-Cter in SUMO2) cross-links involve residues Lys-59 and Lys-62. The segment covering 69–90 (QHGGGGGGGGGAGAAGGGGGGE) has biased composition (gly residues). Position 101 is a phosphoserine (Ser-101). The RRM 1 domain maps to 102-176 (PVVHIRGLID…HPAFVNYSTS (75 aa)). Lys-136 is covalently cross-linked (Glycyl lysine isopeptide (Lys-Gly) (interchain with G-Cter in SUMO2)). A Phosphoserine modification is found at Ser-185. The RRM 2 domain maps to 193 to 270 (SVLLFTILNP…CTLKIEYAKP (78 aa)). The residue at position 269 (Lys-269) is an N6-acetyllysine. Positions 284 to 301 (DYTNPNLSGQGDPGSNPN) are enriched in polar residues. The disordered stretch occupies residues 284–378 (DYTNPNLSGQ…PPPPPEYGPH (95 aa)). Phosphoserine occurs at positions 291 and 298. A Glycyl lysine isopeptide (Lys-Gly) (interchain with G-Cter in SUMO2) cross-link involves residue Lys-302. Arg-354 and Arg-358 each carry asymmetric dimethylarginine. Positions 364–375 (GHPPPPPPPPEY) are enriched in pro residues. Ser-381 is subject to Phosphoserine. RRM domains lie at 382 to 478 (PVLM…KDFS) and 495 to 583 (RIQH…LCFS). Position 544 is a phosphoserine; by CaMK4 (Ser-544). A Glycyl lysine isopeptide (Lys-Gly) (interchain with G-Cter in SUMO2) cross-link involves residue Lys-568.

As to quaternary structure, identified in a IGF2BP1-dependent mRNP granule complex containing untranslated mRNAs. Interacts with HNRNPLL. Interacts with APEX1; the interaction is DNA-dependent. Component of a complex with SETD2. Interacts with ELAVL1. Part of a transcription inhibitory ribonucleoprotein complex composed at least of the circular RNA circZNF827, ZNF827 and HNRNPK. Interacts with CHD8 in an RNA-dependent manner. Several isoelectric forms of the L protein are probably the results of post-translational modifications. In terms of processing, phosphorylation at Ser-544 by CaMK4 enhances interaction with a CaMK4-responsive RNA element (CaRRE1), and prevents inclusion of the stress axis-regulated exon (STREX) of the KCNMA1 potassium channel transcripts upon membrane depolarization.

It is found in the nucleus. Its subcellular location is the nucleoplasm. It localises to the cytoplasm. Functionally, splicing factor binding to exonic or intronic sites and acting as either an activator or repressor of exon inclusion. Exhibits a binding preference for CA-rich elements. Component of the heterogeneous nuclear ribonucleoprotein (hnRNP) complexes and associated with most nascent transcripts. Associates, together with APEX1, to the negative calcium responsive element (nCaRE) B2 of the APEX2 promoter. As part of a ribonucleoprotein complex composed at least of ZNF827, HNRNPK and the circular RNA circZNF827 that nucleates the complex on chromatin, may negatively regulate the transcription of genes involved in neuronal differentiation. Regulates alternative splicing of a core group of genes involved in neuronal differentiation, likely by mediating H3K36me3-coupled transcription elongation and co-transcriptional RNA processing via interaction with CHD8. This Homo sapiens (Human) protein is Heterogeneous nuclear ribonucleoprotein L (HNRNPL).